A 245-amino-acid chain; its full sequence is tRNA pseudouridine synthase A (245 aa).

Aspartate 52 serves as the catalytic Nucleophile. Residue tyrosine 110 coordinates substrate.

It belongs to the tRNA pseudouridine synthase TruA family. In terms of assembly, homodimer.

It carries out the reaction uridine(38/39/40) in tRNA = pseudouridine(38/39/40) in tRNA. Its function is as follows. Formation of pseudouridine at positions 38, 39 and 40 in the anticodon stem and loop of transfer RNAs. This Borrelia turicatae (strain 91E135) protein is tRNA pseudouridine synthase A.